We begin with the raw amino-acid sequence, 133 residues long: MKKNITKTIIASTVIAAGLLTQTNDAKAFFSYEWKGLEIAKNLADQAKKDDERIDKLMKESDKNLTPYKAETVNDLYLIVKKLSQGDVKKAVVRIKDGGPRDYYTFDLTRPLEENRKNIKVVKNGEIDSITWY.

Positions 1 to 28 (MKKNITKTIIASTVIAAGLLTQTNDAKA) are cleaved as a signal peptide.

This sequence belongs to the CHIPS/FLIPr family.

It is found in the secreted. In terms of biological role, may be involved in countering the first line of host defense mechanisms. Impairs the leukocyte response to FPRL1 agonists by binding directly to host FPRL1. The chain is FPRL1 inhibitory protein (flr) from Staphylococcus aureus (strain USA300).